The primary structure comprises 90 residues: Small ribosomal subunit protein bS20 (90 aa).

The disordered stretch occupies residues 1-21 (MANHKSALKRVRQTKKRTERN).

The protein belongs to the bacterial ribosomal protein bS20 family.

Binds directly to 16S ribosomal RNA. In Nitratiruptor sp. (strain SB155-2), this protein is Small ribosomal subunit protein bS20.